Consider the following 301-residue polypeptide: Nucleosome assembly protein 1;3 (301 aa).

Residues 15 to 69 are a coiled coil; the sequence is VETLKNKLQALAEQHVDVLESLAPVVRKRVDVLIEIQSQHDELEAKFLEEKSALE. A Nuclear export signal motif is present at residues 36-51; it reads LAPVVRKRVDVLIEIQ. The segment at 279-301 is disordered; it reads EDYGASWVDDEEDDDDEYSDEEA. Serine 297 is modified (phosphoserine; by CK2).

Belongs to the nucleosome assembly protein (NAP) family.

Its subcellular location is the nucleus. The protein localises to the cytoplasm. Its function is as follows. May modulate chromatin structure by regulation of nucleosome assembly/disassembly. This chain is Nucleosome assembly protein 1;3 (NAP1;3), found in Oryza sativa subsp. indica (Rice).